The chain runs to 250 residues: Probable transcriptional regulatory protein Cag_0165 (250 aa).

Belongs to the TACO1 family.

It localises to the cytoplasm. The chain is Probable transcriptional regulatory protein Cag_0165 from Chlorobium chlorochromatii (strain CaD3).